The following is a 459-amino-acid chain: Argininosuccinate lyase (459 aa).

The protein belongs to the lyase 1 family. Argininosuccinate lyase subfamily.

The protein resides in the cytoplasm. The catalysed reaction is 2-(N(omega)-L-arginino)succinate = fumarate + L-arginine. It participates in amino-acid biosynthesis; L-arginine biosynthesis; L-arginine from L-ornithine and carbamoyl phosphate: step 3/3. This chain is Argininosuccinate lyase, found in Staphylococcus aureus (strain Mu3 / ATCC 700698).